The chain runs to 126 residues: MYYPLLSIALGSVLGAWLRWFLGLKLNPIYPQIPLGTVTVNLVGGFIIGFAMAYFAHSDLSPNYKLFVITGFCGALTTFSTFSIEIVTLLQSGKWGMAMLAISIHLIGSLIFTCLGLATYYWVAGH.

4 helical membrane-spanning segments follow: residues 4–24 (PLLS…FLGL), 33–53 (IPLG…FAMA), 67–87 (FVIT…IEIV), and 97–117 (MAML…CLGL). 2 residues coordinate Na(+): Gly-74 and Thr-77.

This sequence belongs to the fluoride channel Fluc/FEX (TC 1.A.43) family.

The protein resides in the cell inner membrane. It catalyses the reaction fluoride(in) = fluoride(out). Na(+) is not transported, but it plays an essential structural role and its presence is essential for fluoride channel function. Its function is as follows. Fluoride-specific ion channel. Important for reducing fluoride concentration in the cell, thus reducing its toxicity. The protein is Fluoride-specific ion channel FluC of Acinetobacter baumannii (strain SDF).